A 609-amino-acid chain; its full sequence is (R)-linalool synthase TPS5, chloroplastic (609 aa).

The transit peptide at 1 to 42 directs the protein to the chloroplast; that stretch reads MVSILSNIGMMVVTFKRPSLFTSLRRRSANNIIITKHSHPIS. (2E)-geranyl diphosphate contacts are provided by Arg-325, Asp-362, Asp-366, Arg-503, and Asp-506. 2 residues coordinate Mg(2+): Asp-362 and Asp-366. The DDXXD motif signature appears at 362-366; it reads DDIYD. Mg(2+) contacts are provided by Asp-506, Thr-510, and Glu-514.

It belongs to the terpene synthase family. Tpsb subfamily. The cofactor is Mg(2+). Requires Mn(2+) as cofactor. As to expression, highly expressed in young fruits and plant tops. Expressed in flower buds and trichomes of petioles and stems. Expressed at low levels in young leaves, stems, petioles, sepals and petals.

The protein resides in the plastid. The protein localises to the chloroplast. It catalyses the reaction (2E)-geranyl diphosphate + H2O = (R)-linalool + diphosphate. The catalysed reaction is (2E,6E)-farnesyl diphosphate + H2O = (6E)-nerolidol + diphosphate. It functions in the pathway secondary metabolite biosynthesis; terpenoid biosynthesis. Functionally, involved in monoterpene (C10) biosynthesis in glandular trichomes. Converts geranyl diphosphate to linalool in glandular trichomes in response to jasmonate (JA). Can convert farnesyl diphosphate to nerolidol in vitro. This is (R)-linalool synthase TPS5, chloroplastic from Solanum lycopersicum (Tomato).